A 308-amino-acid polypeptide reads, in one-letter code: D-alanine--D-alanine ligase (308 aa).

An ATP-grasp domain is found at 103–302 (KTVMKTAGVP…FDELVQWMVE (200 aa)). 130–184 (MEPPYVIKPVADGSSVGVYIITEQHQHPPQELFRDDWAYGDKLLVEKYVAGKELT) serves as a coordination point for ATP. Mg(2+) contacts are provided by Asp-252, Glu-269, and Asn-271.

The protein belongs to the D-alanine--D-alanine ligase family. The cofactor is Mg(2+). It depends on Mn(2+) as a cofactor.

The protein resides in the cytoplasm. The catalysed reaction is 2 D-alanine + ATP = D-alanyl-D-alanine + ADP + phosphate + H(+). It functions in the pathway cell wall biogenesis; peptidoglycan biosynthesis. Its function is as follows. Cell wall formation. This chain is D-alanine--D-alanine ligase, found in Rhodopseudomonas palustris (strain BisA53).